A 77-amino-acid chain; its full sequence is Translation initiation factor IF-1, chloroplastic (77 aa).

An S1-like domain is found at 1–71 (MKEQKWIHEG…TRGRIIYRLR (71 aa)).

This sequence belongs to the IF-1 family. As to quaternary structure, component of the 30S ribosomal translation pre-initiation complex which assembles on the 30S ribosome in the order IF-2 and IF-3, IF-1 and N-formylmethionyl-tRNA(fMet); mRNA recruitment can occur at any time during PIC assembly.

It is found in the plastid. The protein localises to the chloroplast. In terms of biological role, one of the essential components for the initiation of protein synthesis. Stabilizes the binding of IF-2 and IF-3 on the 30S subunit to which N-formylmethionyl-tRNA(fMet) subsequently binds. Helps modulate mRNA selection, yielding the 30S pre-initiation complex (PIC). Upon addition of the 50S ribosomal subunit IF-1, IF-2 and IF-3 are released leaving the mature 70S translation initiation complex. This Spinacia oleracea (Spinach) protein is Translation initiation factor IF-1, chloroplastic.